The chain runs to 360 residues: Phosphoserine aminotransferase (360 aa).

Arg41 lines the L-glutamate pocket. Residues Trp101, Thr152, Asp172, and Gln195 each contribute to the pyridoxal 5'-phosphate site. N6-(pyridoxal phosphate)lysine is present on Lys196. Residue 237-238 (NT) coordinates pyridoxal 5'-phosphate.

This sequence belongs to the class-V pyridoxal-phosphate-dependent aminotransferase family. SerC subfamily. As to quaternary structure, homodimer. The cofactor is pyridoxal 5'-phosphate.

It is found in the cytoplasm. The catalysed reaction is O-phospho-L-serine + 2-oxoglutarate = 3-phosphooxypyruvate + L-glutamate. The enzyme catalyses 4-(phosphooxy)-L-threonine + 2-oxoglutarate = (R)-3-hydroxy-2-oxo-4-phosphooxybutanoate + L-glutamate. The protein operates within amino-acid biosynthesis; L-serine biosynthesis; L-serine from 3-phospho-D-glycerate: step 2/3. Its pathway is cofactor biosynthesis; pyridoxine 5'-phosphate biosynthesis; pyridoxine 5'-phosphate from D-erythrose 4-phosphate: step 3/5. Catalyzes the reversible conversion of 3-phosphohydroxypyruvate to phosphoserine and of 3-hydroxy-2-oxo-4-phosphonooxybutanoate to phosphohydroxythreonine. The chain is Phosphoserine aminotransferase from Burkholderia cenocepacia (strain HI2424).